The chain runs to 255 residues: Ribonuclease HII (255 aa).

One can recognise an RNase H type-2 domain in the interval 72 to 255 (QYIAGIDEAG…RSFAPVKAHE (184 aa)). 3 residues coordinate a divalent metal cation: aspartate 78, glutamate 79, and aspartate 170.

This sequence belongs to the RNase HII family. It depends on Mn(2+) as a cofactor. The cofactor is Mg(2+).

It is found in the cytoplasm. It catalyses the reaction Endonucleolytic cleavage to 5'-phosphomonoester.. In terms of biological role, endonuclease that specifically degrades the RNA of RNA-DNA hybrids. In Bacillus licheniformis (strain ATCC 14580 / DSM 13 / JCM 2505 / CCUG 7422 / NBRC 12200 / NCIMB 9375 / NCTC 10341 / NRRL NRS-1264 / Gibson 46), this protein is Ribonuclease HII.